Reading from the N-terminus, the 56-residue chain is Large ribosomal subunit protein bL33 (56 aa).

This sequence belongs to the bacterial ribosomal protein bL33 family.

In Tropheryma whipplei (strain TW08/27) (Whipple's bacillus), this protein is Large ribosomal subunit protein bL33.